Here is a 465-residue protein sequence, read N- to C-terminus: G1/S-specific cyclin CLN3 (465 aa).

Positions 44–171 (EMLHHLLSVE…HILKSLEWVV (128 aa)) constitute a Cyclin N-terminal domain.

Belongs to the cyclin family. In terms of assembly, interacts with CDC28 and SLA1. Post-translationally, hyperphosphorylated. GRR1 preferentially mediates the degradation of hyperphosphorylated CLN3.

Its function is as follows. G1/S-specific cyclin essential for the control of the cell cycle at the G1/S (start) transition. CLN3 may be an upstream activator of the G1 cyclins which directly catalyze start. Required for budding and for cell cycle progression and morphogenesis in environment-induced hyphae. Degradation is mediated by GRR1. Through binding to CDC28, controls the phosphorylation of SLA1 which regulates cortical actin patch dynamics. This Candida albicans (strain SC5314 / ATCC MYA-2876) (Yeast) protein is G1/S-specific cyclin CLN3 (CLN3).